We begin with the raw amino-acid sequence, 373 residues long: Queuine tRNA-ribosyltransferase (373 aa).

The Proton acceptor role is filled by Asp90. Substrate-binding positions include 90–94, Asp144, Gln193, and Gly220; that span reads DSGGF. The tract at residues 251 to 257 is RNA binding; the sequence is GVGTPED. The Nucleophile role is filled by Asp270. The segment at 275 to 279 is RNA binding; important for wobble base 34 recognition; the sequence is TRNAR. Cys308, Cys310, Cys313, and His339 together coordinate Zn(2+).

The protein belongs to the queuine tRNA-ribosyltransferase family. In terms of assembly, homodimer. Within each dimer, one monomer is responsible for RNA recognition and catalysis, while the other monomer binds to the replacement base PreQ1. The cofactor is Zn(2+).

The catalysed reaction is 7-aminomethyl-7-carbaguanine + guanosine(34) in tRNA = 7-aminomethyl-7-carbaguanosine(34) in tRNA + guanine. The protein operates within tRNA modification; tRNA-queuosine biosynthesis. Catalyzes the base-exchange of a guanine (G) residue with the queuine precursor 7-aminomethyl-7-deazaguanine (PreQ1) at position 34 (anticodon wobble position) in tRNAs with GU(N) anticodons (tRNA-Asp, -Asn, -His and -Tyr). Catalysis occurs through a double-displacement mechanism. The nucleophile active site attacks the C1' of nucleotide 34 to detach the guanine base from the RNA, forming a covalent enzyme-RNA intermediate. The proton acceptor active site deprotonates the incoming PreQ1, allowing a nucleophilic attack on the C1' of the ribose to form the product. After dissociation, two additional enzymatic reactions on the tRNA convert PreQ1 to queuine (Q), resulting in the hypermodified nucleoside queuosine (7-(((4,5-cis-dihydroxy-2-cyclopenten-1-yl)amino)methyl)-7-deazaguanosine). In Campylobacter jejuni (strain RM1221), this protein is Queuine tRNA-ribosyltransferase.